Consider the following 182-residue polypeptide: MTELPQARRLLKQGEWTGPAAGCVRLGYDERFLRRKRLETEAGDGFLVDLAETTSLDEGCAFELADGRLVEVRAAEEEVVAVTGPILRAAWHIGNRHTPCQIEADRLVIRRDHVLEEMLRGLGLTLEPRTEPFRPEGGAYGHGRTLGHDHGPAQGHGHDHPHVHVHISHKPDEDETPDADPA.

The interval 128–182 is disordered; it reads PRTEPFRPEGGAYGHGRTLGHDHGPAQGHGHDHPHVHVHISHKPDEDETPDADPA. Basic and acidic residues predominate over residues 146–162; that stretch reads LGHDHGPAQGHGHDHPH. The span at 173–182 shows a compositional bias: acidic residues; sequence EDETPDADPA.

Belongs to the UreE family.

It is found in the cytoplasm. Involved in urease metallocenter assembly. Binds nickel. Probably functions as a nickel donor during metallocenter assembly. The polypeptide is Urease accessory protein UreE (Cereibacter sphaeroides (strain ATCC 17023 / DSM 158 / JCM 6121 / CCUG 31486 / LMG 2827 / NBRC 12203 / NCIMB 8253 / ATH 2.4.1.) (Rhodobacter sphaeroides)).